The chain runs to 364 residues: DNA replication and repair protein RecF (364 aa).

30-37 (GENGSGKT) is an ATP binding site.

The protein belongs to the RecF family.

The protein localises to the cytoplasm. Functionally, the RecF protein is involved in DNA metabolism; it is required for DNA replication and normal SOS inducibility. RecF binds preferentially to single-stranded, linear DNA. It also seems to bind ATP. The chain is DNA replication and repair protein RecF from Xylella fastidiosa (strain M12).